Here is a 322-residue protein sequence, read N- to C-terminus: Protein CCC1 (322 aa).

Topologically, residues 1 to 99 (MSIVALKNAV…LGFFQSVDPR (99 aa)) are cytoplasmic. The disordered stretch occupies residues 19 to 86 (GSGGTSELGG…RNGDNGSDNE (68 aa)). Residues 26–53 (LGGSESTPLLRGSNSNSSRHDNLSSSSS) show a composition bias toward low complexity. S29, S53, S68, S71, and S83 each carry phosphoserine. Residues 60 to 70 (NSAQDLENSPM) show a composition bias toward polar residues. The chain crosses the membrane as a helical span at residues 100-120 (VISDLIIGLSDGLTVPFALTA). Over 121-129 (GLSSLGDAK) the chain is Vacuolar. The helical transmembrane segment at 130 to 150 (LVITGGFAELISGAISMGLGG) threads the bilayer. Residues 151–236 (YLGAKSESDY…PAENRELISA (86 aa)) are Cytoplasmic-facing. The chain crosses the membrane as a helical span at residues 237-257 (VTIGGGYLLGGLVPLVPYFFV). The Vacuolar portion of the chain corresponds to 258-259 (SD). The chain crosses the membrane as a helical span at residues 260 to 280 (VGTGLIYSIIVMVVTLFWFGY). Topologically, residues 281-300 (VKTKLSMGSGSSTSKKVTEG) are cytoplasmic. A helical membrane pass occupies residues 301–321 (VEMVVVGGVAAGAAWFFVKLL). G322 is a topological domain (vacuolar).

The protein belongs to the CCC1 family.

The protein localises to the golgi apparatus membrane. It is found in the vacuole membrane. The enzyme catalyses Fe(2+)(in) = Fe(2+)(out). In terms of biological role, has a role in both calcium and manganese homeostasis. Involved in the transfer of iron and Mn(2+) from the cytosol to the vacuole for storage of these metals. The protein is Protein CCC1 (CCC1) of Saccharomyces cerevisiae (strain ATCC 204508 / S288c) (Baker's yeast).